The chain runs to 267 residues: 2-keto-3-deoxy-L-rhamnonate aldolase (267 aa).

Residue H49 is the Proton acceptor of the active site. Residue Q151 coordinates substrate. Residue E153 participates in Mg(2+) binding. Residues A178 and D179 each contribute to the substrate site. A Mg(2+)-binding site is contributed by D179.

It belongs to the HpcH/HpaI aldolase family. KDR aldolase subfamily. As to quaternary structure, homohexamer. Requires Mg(2+) as cofactor.

The catalysed reaction is 2-dehydro-3-deoxy-L-rhamnonate = (S)-lactaldehyde + pyruvate. Catalyzes the reversible retro-aldol cleavage of 2-keto-3-deoxy-L-rhamnonate (KDR) to pyruvate and lactaldehyde. This Salmonella enteritidis PT4 (strain P125109) protein is 2-keto-3-deoxy-L-rhamnonate aldolase.